The primary structure comprises 486 residues: Cytochrome P450 monooxygenase 1 (486 aa).

An N-terminal signal peptide occupies residues 1–21 (MSHFLPTLILTSLTLVAYVLA). An N-linked (GlcNAc...) asparagine glycan is attached at Asn346. Residue Cys430 coordinates heme. A glycan (N-linked (GlcNAc...) asparagine) is linked at Asn434.

Belongs to the cytochrome P450 family. The cofactor is heme.

It participates in mycotoxin biosynthesis. Its function is as follows. Cytochrome P450 monooxygenase; part of the gene cluster that mediates the biosynthesis of aphidicolin, a specific inhibitor of eukaryotic DNA synthesis and DNA polymerase alpha. The geranylgeranyl pyrophosphate synthase GGS is required for supplying a sufficient amount of geranylgeranyl diphosphate (GGDP), the general precursor of diterpenes. The diterpene synthase ACS then catalyzes the conversion of geranylgeranyl diphosphate to aphidicolan-16-beta-ol via the intermediate syn-copalyldiphosphate (syn-CDP). In addition to aphidicolan-16-beta-ol, the enzyme also produces low levels of amphidicol-15-ene and amphidicol-16-ene. The cytochrome P450 monooxygenase P450-2 then catalyzes the two-step hydroxylation from aphidicolan-16-beta-ol to 3-deoxyaphidicolin via a 17,3-deoxyaphidicolin intermediate. Finally, the cytochrome P450 monooxygenase P450-1 converts 3-deoxyaphidicolin to aphidicolin. The sequence is that of Cytochrome P450 monooxygenase 1 (PbP450-1) from Neocamarosporium betae (Beet black rot fungus).